Here is a 370-residue protein sequence, read N- to C-terminus: Queuine tRNA-ribosyltransferase (370 aa).

Catalysis depends on aspartate 89, which acts as the Proton acceptor. Substrate-binding positions include 89–93 (DSGGF), aspartate 143, glutamine 185, and glycine 212. Positions 243–249 (GVGKPED) are RNA binding. Aspartate 262 serves as the catalytic Nucleophile. The tract at residues 267 to 271 (TRNAR) is RNA binding; important for wobble base 34 recognition. Residues cysteine 300, cysteine 302, cysteine 305, and histidine 331 each contribute to the Zn(2+) site.

Belongs to the queuine tRNA-ribosyltransferase family. Homodimer. Within each dimer, one monomer is responsible for RNA recognition and catalysis, while the other monomer binds to the replacement base PreQ1. Zn(2+) serves as cofactor.

The enzyme catalyses 7-aminomethyl-7-carbaguanine + guanosine(34) in tRNA = 7-aminomethyl-7-carbaguanosine(34) in tRNA + guanine. The protein operates within tRNA modification; tRNA-queuosine biosynthesis. In terms of biological role, catalyzes the base-exchange of a guanine (G) residue with the queuine precursor 7-aminomethyl-7-deazaguanine (PreQ1) at position 34 (anticodon wobble position) in tRNAs with GU(N) anticodons (tRNA-Asp, -Asn, -His and -Tyr). Catalysis occurs through a double-displacement mechanism. The nucleophile active site attacks the C1' of nucleotide 34 to detach the guanine base from the RNA, forming a covalent enzyme-RNA intermediate. The proton acceptor active site deprotonates the incoming PreQ1, allowing a nucleophilic attack on the C1' of the ribose to form the product. After dissociation, two additional enzymatic reactions on the tRNA convert PreQ1 to queuine (Q), resulting in the hypermodified nucleoside queuosine (7-(((4,5-cis-dihydroxy-2-cyclopenten-1-yl)amino)methyl)-7-deazaguanosine). The sequence is that of Queuine tRNA-ribosyltransferase from Pseudoalteromonas atlantica (strain T6c / ATCC BAA-1087).